Reading from the N-terminus, the 534-residue chain is C-22 sterol desaturase ERG5B (534 aa).

A helical transmembrane segment spans residues 43 to 61 (IAVTIFAVLIAYDQFMYIW). Cysteine 480 contributes to the heme binding site.

Belongs to the cytochrome P450 family. Heme serves as cofactor.

It is found in the endoplasmic reticulum membrane. The enzyme catalyses 5-dehydroepisterol + NADPH + O2 + H(+) = ergosta-5,7,22,24(28)-tetraen-3beta-ol + NADP(+) + 2 H2O. It participates in steroid metabolism; ergosterol biosynthesis. C-22 sterol desaturase; part of the third module of ergosterol biosynthesis pathway that includes the late steps of the pathway. ERG5A and ERG5B convert 5-dehydroepisterol into ergosta-5,7,22,24(28)-tetraen-3beta-ol by forming the C-22(23) double bond in the sterol side chain. The third module or late pathway involves the ergosterol synthesis itself through consecutive reactions that mainly occur in the endoplasmic reticulum (ER) membrane. Firstly, the squalene synthase ERG9 catalyzes the condensation of 2 farnesyl pyrophosphate moieties to form squalene, which is the precursor of all steroids. Squalene synthase is crucial for balancing the incorporation of farnesyl diphosphate (FPP) into sterol and nonsterol isoprene synthesis. Secondly, squalene is converted into lanosterol by the consecutive action of the squalene epoxidase ERG1 and the lanosterol synthase ERG7. Then, the delta(24)-sterol C-methyltransferase ERG6 methylates lanosterol at C-24 to produce eburicol. Eburicol is the substrate of the sterol 14-alpha demethylase encoded by CYP51A, CYP51B and CYP51C, to yield 4,4,24-trimethyl ergosta-8,14,24(28)-trienol. CYP51B encodes the enzyme primarily responsible for sterol 14-alpha-demethylation, and plays an essential role in ascospore formation. CYP51A encodes an additional sterol 14-alpha-demethylase, induced on ergosterol depletion and responsible for the intrinsic variation in azole sensitivity. The third CYP51 isoform, CYP51C, does not encode a sterol 14-alpha-demethylase, but is required for full virulence on host wheat ears. The C-14 reductase ERG24 then reduces the C14=C15 double bond which leads to 4,4-dimethylfecosterol. A sequence of further demethylations at C-4, involving the C-4 demethylation complex containing the C-4 methylsterol oxidases ERG25, the sterol-4-alpha-carboxylate 3-dehydrogenase ERG26 and the 3-keto-steroid reductase ERG27, leads to the production of fecosterol via 4-methylfecosterol. ERG28 has a role as a scaffold to help anchor ERG25, ERG26 and ERG27 to the endoplasmic reticulum. The C-8 sterol isomerase ERG2 then catalyzes the reaction which results in unsaturation at C-7 in the B ring of sterols and thus converts fecosterol to episterol. The sterol-C5-desaturases ERG3A and ERG3BB then catalyze the introduction of a C-5 double bond in the B ring to produce 5-dehydroepisterol. The C-22 sterol desaturases ERG5A and ERG5B further convert 5-dehydroepisterol into ergosta-5,7,22,24(28)-tetraen-3beta-ol by forming the C-22(23) double bond in the sterol side chain. Finally, ergosta-5,7,22,24(28)-tetraen-3beta-ol is substrate of the C-24(28) sterol reductase ERG4 to produce ergosterol. This Gibberella zeae (strain ATCC MYA-4620 / CBS 123657 / FGSC 9075 / NRRL 31084 / PH-1) (Wheat head blight fungus) protein is C-22 sterol desaturase ERG5B.